The following is a 159-amino-acid chain: 17.9 kDa class II heat shock protein (159 aa).

In terms of domain architecture, sHSP spans 43-157 (DAKAMAATPA…PKKPRTIQVK (115 aa)).

It belongs to the small heat shock protein (HSP20) family.

Its subcellular location is the cytoplasm. In Glycine max (Soybean), this protein is 17.9 kDa class II heat shock protein (HSP17.9-D).